We begin with the raw amino-acid sequence, 179 residues long: ATP synthase subunit b (179 aa).

Residues 29–48 (VINLAILIGVLVYFGRGVLG) traverse the membrane as a helical segment.

It belongs to the ATPase B chain family. In terms of assembly, F-type ATPases have 2 components, F(1) - the catalytic core - and F(0) - the membrane proton channel. F(1) has five subunits: alpha(3), beta(3), gamma(1), delta(1), epsilon(1). F(0) has four main subunits: a(1), b(1), b'(1) and c(10-14). The alpha and beta chains form an alternating ring which encloses part of the gamma chain. F(1) is attached to F(0) by a central stalk formed by the gamma and epsilon chains, while a peripheral stalk is formed by the delta, b and b' chains.

It localises to the cellular thylakoid membrane. In terms of biological role, f(1)F(0) ATP synthase produces ATP from ADP in the presence of a proton or sodium gradient. F-type ATPases consist of two structural domains, F(1) containing the extramembraneous catalytic core and F(0) containing the membrane proton channel, linked together by a central stalk and a peripheral stalk. During catalysis, ATP synthesis in the catalytic domain of F(1) is coupled via a rotary mechanism of the central stalk subunits to proton translocation. Functionally, component of the F(0) channel, it forms part of the peripheral stalk, linking F(1) to F(0). Its function is as follows. The complex from the organism is particularly stable to disruption and remains functional after 6 hrs at 55 degrees Celsius. The chain is ATP synthase subunit b from Thermosynechococcus vestitus (strain NIES-2133 / IAM M-273 / BP-1).